A 506-amino-acid chain; its full sequence is Maturase K (506 aa).

This sequence belongs to the intron maturase 2 family. MatK subfamily.

The protein localises to the plastid. The protein resides in the chloroplast. Its function is as follows. Usually encoded in the trnK tRNA gene intron. Probably assists in splicing its own and other chloroplast group II introns. The protein is Maturase K of Medicago sativa (Alfalfa).